A 633-amino-acid chain; its full sequence is Phosphomethylpyrimidine synthase (633 aa).

Polar residues predominate over residues 1–13 (MNIRSNPDTTLPA). The disordered stretch occupies residues 1 to 20 (MNIRSNPDTTLPAVTTGPLP). Residues Asn-221, Met-250, Tyr-279, His-315, 335 to 337 (SRG), 376 to 379 (DGLR), and Glu-415 contribute to the substrate site. Residue His-419 coordinates Zn(2+). A substrate-binding site is contributed by Tyr-442. Residue His-483 coordinates Zn(2+). Residues Cys-563, Cys-566, and Cys-571 each coordinate [4Fe-4S] cluster.

This sequence belongs to the ThiC family. As to quaternary structure, homodimer. It depends on [4Fe-4S] cluster as a cofactor.

It catalyses the reaction 5-amino-1-(5-phospho-beta-D-ribosyl)imidazole + S-adenosyl-L-methionine = 4-amino-2-methyl-5-(phosphooxymethyl)pyrimidine + CO + 5'-deoxyadenosine + formate + L-methionine + 3 H(+). It functions in the pathway cofactor biosynthesis; thiamine diphosphate biosynthesis. In terms of biological role, catalyzes the synthesis of the hydroxymethylpyrimidine phosphate (HMP-P) moiety of thiamine from aminoimidazole ribotide (AIR) in a radical S-adenosyl-L-methionine (SAM)-dependent reaction. This Bradyrhizobium sp. (strain ORS 278) protein is Phosphomethylpyrimidine synthase.